Here is an 808-residue protein sequence, read N- to C-terminus: N-terminal kinase-like protein (808 aa).

One can recognise a Protein kinase domain in the interval 14-314 (FELIPEPPEG…PEDFCRHKVL (301 aa)). 3 HEAT repeats span residues 350 to 388 (IIPV…VNTQ), 389 to 427 (IFPH…LNVE), and 507 to 545 (ILPV…EDPT). Disordered regions lie at residues 540 to 566 (VSED…GGAA), 587 to 646 (SHPT…RWDD), and 658 to 808 (SVLA…RKLD). The span at 556–566 (AASSPGMGGAA) shows a compositional bias: low complexity. The span at 587-600 (SHPTTAPTETNIPQ) shows a compositional bias: polar residues. Residues 601–617 (RPTPEGVPAPAPTPVPA) show a composition bias toward pro residues. Residues 660–680 (LAQQDDWSTGGQVSRASQVSN) are compositionally biased toward polar residues. Positions 681-690 (SDHKSSKSPE) are enriched in basic and acidic residues. Serine 754 carries the post-translational modification Phosphoserine. Acidic residues predominate over residues 755–764 (WGEDNWEGLE). Residues 761-797 (EGLETDSRQVKAELARKKREERRREMEAKRAERKVAK) are a coiled coil. Basic and acidic residues-rich tracts occupy residues 765 to 775 (TDSRQVKAELA) and 782 to 795 (RRRE…ERKV). Residues 793-808 (RKVAKGPMKLGARKLD) form an interaction with COPB1 region.

The protein belongs to the protein kinase superfamily. As to quaternary structure, interacts with GORAB. Interacts with COPA, COPB1 and COPB2. Homooligomer. Interacts with AP2B1. Ubiquitous.

Its subcellular location is the cytoplasm. The protein localises to the cytoskeleton. The protein resides in the microtubule organizing center. It is found in the centrosome. It localises to the endoplasmic reticulum-Golgi intermediate compartment. Its subcellular location is the golgi apparatus. The protein localises to the cis-Golgi network. The protein resides in the nucleus. Regulates COPI-mediated retrograde protein traffic at the interface between the Golgi apparatus and the endoplasmic reticulum. Involved in the maintenance of the Golgi apparatus morphology. Functionally, acts as a transcriptional activator. It binds to three different types of GC-rich DNA binding sites (box-A, -B and -C) in the beta-polymerase promoter region. It also binds to the TERT promoter region. The sequence is that of N-terminal kinase-like protein (SCYL1) from Homo sapiens (Human).